The following is a 120-amino-acid chain: Spermidine export protein MdtJ (120 aa).

4 helical membrane passes run 1-21 (MFYWILLALAIATEITGTLSM), 31-51 (AGFILMLVMITLSYIFLSFAV), 54-74 (IALGVAYALWEGIGILFITIF), and 81-101 (EALSTMKIAGLLTLVAGIVLI).

This sequence belongs to the drug/metabolite transporter (DMT) superfamily. Small multidrug resistance (SMR) (TC 2.A.7.1) family. MdtJ subfamily. Forms a complex with MdtI.

It localises to the cell inner membrane. In terms of biological role, catalyzes the excretion of spermidine. This is Spermidine export protein MdtJ from Salmonella choleraesuis (strain SC-B67).